The following is a 138-amino-acid chain: Protein X (138 aa).

The disordered stretch occupies residues 20-43; the sequence is PLRGQPSGPSVSGTSAGSPSSAAS. Low complexity predominate over residues 25-43; it reads PSGPSVSGTSAGSPSSAAS. A mitochondrial targeting sequence region spans residues 68-113; it reads PCCLGFTCADLRTMDSTVNFVPWHAKRQLGMMQKDFWTAYIRDQLL.

This sequence belongs to the orthohepadnavirus protein X family. In terms of assembly, may form homodimer. May interact with host CEBPA, CFLAR, CREB1, DDB1, E4F1, HBXIP, HSPD1/HSP60, NFKBIA, POLR2E and SMAD4. Interacts with host SMC5-SMC6 complex and induces its degradation. Interacts with host TRPC4AP; leading to prevent ubiquitination of TRPC4AP. Interacts with host PLSCR1; this interaction promotes ubiquitination and degradation of HBx and impairs HBx-mediated cell proliferation. Post-translationally, a fraction may be phosphorylated in insect cells and HepG2 cells, a human hepatoblastoma cell line. Phosphorylated in vitro by host protein kinase C or mitogen-activated protein kinase. N-acetylated in insect cells.

It is found in the host cytoplasm. The protein resides in the host nucleus. It localises to the host mitochondrion. Its function is as follows. Multifunctional protein that plays a role in silencing host antiviral defenses and promoting viral transcription. Does not seem to be essential for HBV infection. May be directly involved in development of cirrhosis and liver cancer (hepatocellular carcinoma). Most of cytosolic activities involve modulation of cytosolic calcium. The effect on apoptosis is controversial depending on the cell types in which the studies have been conducted. May induce apoptosis by localizing in mitochondria and causing loss of mitochondrial membrane potential. May also modulate apoptosis by binding host CFLAR, a key regulator of the death-inducing signaling complex (DISC). Promotes viral transcription by using the host E3 ubiquitin ligase DDB1 to target the SMC5-SMC6 complex to proteasomal degradation. This host complex would otherwise bind to viral episomal DNA, and prevents its transcription. Moderately stimulates transcription of many different viral and cellular transcription elements. Promoters and enhancers stimulated by HBx contain DNA binding sites for NF-kappa-B, AP-1, AP-2, c-EBP, ATF/CREB, or the calcium-activated factor NF-AT. The sequence is that of Protein X from Ground squirrel hepatitis virus (strain 27) (GSHV).